The primary structure comprises 286 residues: 33 kDa chaperonin (286 aa).

2 disulfides stabilise this stretch: cysteine 233–cysteine 235 and cysteine 267–cysteine 270.

Belongs to the HSP33 family. Post-translationally, under oxidizing conditions two disulfide bonds are formed involving the reactive cysteines. Under reducing conditions zinc is bound to the reactive cysteines and the protein is inactive.

The protein localises to the cytoplasm. Redox regulated molecular chaperone. Protects both thermally unfolding and oxidatively damaged proteins from irreversible aggregation. Plays an important role in the bacterial defense system toward oxidative stress. The protein is 33 kDa chaperonin of Histophilus somni (strain 129Pt) (Haemophilus somnus).